The following is a 523-amino-acid chain: Cytochrome P450 monooxygenase bsc5 (523 aa).

A helical membrane pass occupies residues 16–36 (MQLHWTVLGLLPVLFIAILGP). N-linked (GlcNAc...) asparagine glycans are attached at residues N178, N281, and N403. C459 is a binding site for heme.

It belongs to the cytochrome P450 family. Requires heme as cofactor.

The protein resides in the membrane. The protein operates within mycotoxin biosynthesis. Its function is as follows. Cytochrome P450 monooxygenase; part of the gene cluster that mediates the biosynthesis of the diterpene glucoside brassicicene C. In the first step of the brassicicene C biosynthesis, the bifunctional diterpene synthase bsc8 that possesses both prenyl transferase and terpene cyclase activity, converts isopentenyl diphosphate and dimethylallyl diphosphate into geranylgeranyl diphosphate (GGDP) that is further converted into fusicocca-2,10(14)-diene, the first precursor for brassicicene C. Fusicocca-2,10(14)-diene is then substrate of cytochrome P450 monooxygenase bsc1 for hydroxylation at the C-8 position. Oxidation at C-16 position to aldehyde is then catalyzed by the cytochrome P450 monooyxygenase bsc7, yielding fusicocca-2,10(14)-diene-8-beta,16-diol. Follows the isomerization of the double bond and reduction of aldehyde to alcohol catalyzed by the short-chain dehydrogenase/reductase bsc3 to yield the diol compound fusicocca-1,10(14)-diene-8 beta,16-diol. The next step is the oxidation at the C-3 position of fusicocca-2,10(14)-diene-8-beta,16-diol catalyzed by the alpha-ketoglutarate dependent dioxygenase bsc9, to produce a triol compound. Methylation of the hydroxy group at position 16 is performed by the methyltransferase bsc6. 16-O-methylation is followed by oxidation at the C-13 position to ketone and an alkyl shift of the methyl group leads to brassicicene C. Although the probable acetyltransferase bsc4 is included in the gene cluster, no acetylation reactions are necessary for brassicicene C biosynthesis. However, the fact that brassicicene E, which is a structurally related compound having an acetoxy group at position 12, was previously isolated from another strain of A.brassicicola suggests that the ATCC 96836 strain might also produce a small amount of brassicicene E. The protein is Cytochrome P450 monooxygenase bsc5 of Alternaria brassicicola (Dark leaf spot agent).